The chain runs to 82 residues: Cytochrome c oxidase-assembly factor cox-23, mitochondrial (82 aa).

The interval 1–27 (MAQAGSENKEPWNEETRAKFEGKSRSE) is disordered. The segment covering 7–27 (ENKEPWNEETRAKFEGKSRSE) has biased composition (basic and acidic residues). A CHCH domain is found at 29-71 (LDPCQEAAQRSIRCLHRNQGDRTMCSDYFEAYRECKKQWIERR). Short sequence motifs (cx9C motif) lie at residues 32–42 (CQEAAQRSIRC) and 53–63 (CSDYFEAYREC). 2 disulfide bridges follow: cysteine 32–cysteine 63 and cysteine 42–cysteine 53.

Belongs to the COX23 family.

The protein resides in the mitochondrion intermembrane space. In terms of biological role, required for the assembly of cytochrome c oxidase. The chain is Cytochrome c oxidase-assembly factor cox-23, mitochondrial (cox-23) from Neurospora crassa (strain ATCC 24698 / 74-OR23-1A / CBS 708.71 / DSM 1257 / FGSC 987).